The chain runs to 230 residues: Flavin-dependent thymidylate synthase (230 aa).

The region spanning 1–217 (MEIKVLEKGF…PVTYEAFLNF (217 aa)) is the ThyX domain. FAD contacts are provided by residues serine 55, 78-80 (RHR), and glutamate 86. Residues 75–78 (QLVR), 86–90 (ERSGR), and arginine 156 each bind dUMP. Positions 78–88 (RHRIASINERS) match the ThyX motif motif. FAD-binding positions include 172–174 (NAR) and asparagine 178. Arginine 183 lines the dUMP pocket. The active-site Involved in ionization of N3 of dUMP, leading to its activation is the arginine 183.

It belongs to the thymidylate synthase ThyX family. In terms of assembly, homotetramer. FAD serves as cofactor.

It carries out the reaction dUMP + (6R)-5,10-methylene-5,6,7,8-tetrahydrofolate + NADPH + H(+) = dTMP + (6S)-5,6,7,8-tetrahydrofolate + NADP(+). It participates in pyrimidine metabolism; dTTP biosynthesis. Its function is as follows. Catalyzes the reductive methylation of 2'-deoxyuridine-5'-monophosphate (dUMP) to 2'-deoxythymidine-5'-monophosphate (dTMP) while utilizing 5,10-methylenetetrahydrofolate (mTHF) as the methyl donor, and NADPH and FADH(2) as the reductant. This Kosmotoga olearia (strain ATCC BAA-1733 / DSM 21960 / TBF 19.5.1) protein is Flavin-dependent thymidylate synthase.